A 463-amino-acid chain; its full sequence is O-acetyltransferase SAT5 (463 aa).

The protein belongs to the trichothecene 3-O-acetyltransferase family.

Its pathway is mycotoxin biosynthesis. O-acetyltransferase; part of the satratoxin SC1 cluster involved in the biosynthesis of satratoxins, trichothecene mycotoxins that are associated with human food poisonings. Satratoxins are suggested to be made by products of multiple gene clusters (SC1, SC2 and SC3) that encode 21 proteins in all, including polyketide synthases, acetyltransferases, and other enzymes expected to modify the trichothecene skeleton. SC1 encodes 10 proteins, SAT1 to SAT10. The largest are SAT8, which encodes a putative polyketide synthase (PKS) with a conventional non-reducing architecture, and SAT10, a putative protein containing four ankyrin repeats and thus may be involved in protein scaffolding. The putative short-chain reductase SAT3 may assist the PKS in some capacity. SAT6 contains a secretory lipase domain and acts probably as a trichothecene esterase. SAT5 encodes a putative acetyltransferase, and so, with SAT6, may affect endogenous protection from toxicity. The probable transcription factor SAT9 may regulate the expression of the SC1 cluster. SC2 encodes proteins SAT11 to SAT16, the largest of which encodes the putative reducing PKS SAT13. SAT11 is a cytochrome P450 monooxygenase, while SAT14 and SAT16 are probable acetyltransferases. The SC2 cluster may be regulated by the transcription factor SAT15. SC3 is a small cluster that encodes 5 proteins, SAT17 to SAT21. SAT21 is a putative MFS-type transporter which may have a role in exporting secondary metabolites. The four other proteins putatively encoded in SC3 include the taurine hydroxylase-like protein SAT17, the O-methyltransferase SAT18, the acetyltransferase SAT19, and the Cys6-type zinc finger SAT20, the latter being probably involved in regulation of SC3 expression. The chain is O-acetyltransferase SAT5 from Stachybotrys chartarum (strain CBS 109288 / IBT 7711) (Toxic black mold).